Consider the following 545-residue polypeptide: E3 ubiquitin-protein ligase ipaH9.8 (545 aa).

The segment at 1–242 (MLPINNNFSL…YHGPRIYFSM (242 aa)) is interaction with target proteins. LRR repeat units follow at residues 57 to 77 (NSDE…NLPA), 78 to 99 (QITL…PVTL), 100 to 117 (KKLY…VLPP), 118 to 139 (ALES…PDSL), 140 to 157 (LTMN…SLPQ), 158 to 179 (ALKN…SEGN), 182 to 203 (VVRE…ILNL), and 205 to 228 (NECS…QRLT). Residues 243-250 (SDGQQNTL) form a linker region. Residues 251-545 (HRPLADAVTA…SENGSQLHHS (295 aa)) are E3 ubiquitin-protein ligase catalytic domain. The NEL domain maps to 253 to 545 (PLADAVTAWF…SENGSQLHHS (293 aa)). The active-site Glycyl thioester intermediate is C337.

This sequence belongs to the LRR-containing bacterial E3 ligase family. Also interacts with human and mouse U2AF1 (U2AF35). In terms of processing, ubiquitinated in the presence of host E1 ubiquitin-activating enzyme, E2 ubiquitin-conjugating enzyme and ubiquitin.

It is found in the secreted. The protein localises to the host cytoplasm. It localises to the host nucleus. It catalyses the reaction S-ubiquitinyl-[E2 ubiquitin-conjugating enzyme]-L-cysteine + [acceptor protein]-L-lysine = [E2 ubiquitin-conjugating enzyme]-L-cysteine + N(6)-ubiquitinyl-[acceptor protein]-L-lysine.. Its activity is regulated as follows. Exists in an autoinhibited state in the absence of substrate protein, due to interactions of the leucine-rich repeats with NEL domain. Is activated upon binding to a substrate protein. Effector E3 ubiquitin ligase that interferes with host's ubiquitination pathway and modulates the acute inflammatory responses, thus facilitating bacterial colonization within the host cell. Interacts with IKBKG (NEMO) and TNIP1 (ABIN-1), a ubiquitin-binding adapter protein, which results in TNIP1-dependent 'Lys-27'-linked polyubiquitination of IKBKG. Consequently, polyubiquitinated IKBKG undergoes proteasome-dependent degradation, which perturbs NF-kappa-B activation during bacterial infection. Mediates polyubiquitination of host U2AF1, leading to its proteasomal degradation. Catalyzes 'Lys-48'-linked polyubiquitination and subsequent degradation of a subset of host guanylate-binding proteins (GBP1, GBP2, GBP4 and GBP6), thereby suppressing host cell defense. In contrast, host GBP3 and GBP7 are not ubiquitinated by IpaH9.8. Uses UBE2D2 (UBCH5B) as an E2 ubiquitin-conjugating enzyme. The polypeptide is E3 ubiquitin-protein ligase ipaH9.8 (ipaH9.8) (Shigella sonnei (strain Ss046)).